The primary structure comprises 324 residues: Fibronectin type III domain-containing protein 8 (324 aa).

Residues 179-280 (PDTPFIFEHT…KPYKFATLAT (102 aa)) form the Fibronectin type-III domain.

The protein is Fibronectin type III domain-containing protein 8 (FNDC8) of Homo sapiens (Human).